The chain runs to 83 residues: Small ribosomal subunit protein eS21 (83 aa).

It belongs to the eukaryotic ribosomal protein eS21 family. In terms of assembly, component of the 40S small ribosomal subunit.

Its subcellular location is the cytoplasm. It localises to the cytosol. The protein resides in the rough endoplasmic reticulum. Functionally, component of the small ribosomal subunit. The ribosome is a large ribonucleoprotein complex responsible for the synthesis of proteins in the cell. In Ictalurus punctatus (Channel catfish), this protein is Small ribosomal subunit protein eS21 (rps21).